Consider the following 66-residue polypeptide: Large ribosomal subunit protein uL29 (66 aa).

Belongs to the universal ribosomal protein uL29 family.

This chain is Large ribosomal subunit protein uL29, found in Bartonella quintana (strain Toulouse) (Rochalimaea quintana).